Here is a 435-residue protein sequence, read N- to C-terminus: Xylose isomerase (435 aa).

Catalysis depends on residues His99 and Asp102. Mg(2+) is bound by residues Glu230, Glu266, His269, Asp294, Asp305, Asp307, and Asp337.

Belongs to the xylose isomerase family. Homotetramer. Mg(2+) is required as a cofactor.

It is found in the cytoplasm. The enzyme catalyses alpha-D-xylose = alpha-D-xylulofuranose. The chain is Xylose isomerase from Enterococcus faecalis (strain ATCC 700802 / V583).